Consider the following 154-residue polypeptide: MASASARGNQDKDAHFPPPSKQSLLFCPKSKLHIHRAEISKIMRECQEESFWKRALPFSLVSMLVTQGLVYQGYLAANSRFGSLPKVALAGLLGFGLGKVSYIGVCQSKFHFFEDQLRGAGFGPQHNRHCLLTCEECKIKHGLSEKGDSQPSAS.

Residues 1–22 are disordered; the sequence is MASASARGNQDKDAHFPPPSKQ. One can recognise an OCIA domain in the interval 1–120; it reads MASASARGNQ…HFFEDQLRGA (120 aa). Lysine 41 carries the N6-acetyllysine modification.

As to quaternary structure, interacts (via OCIA domain) with OCIAD1/ASRIJ and STAT3.

Its subcellular location is the endosome. It localises to the mitochondrion. It is found in the mitochondrion inner membrane. Has an essential role in the assembly of mitochondrial respiratory chain complex III. Is also required for STAT3 activation and plays a role in cell migration. The sequence is that of OCIA domain-containing protein 2 (OCIAD2) from Homo sapiens (Human).